Consider the following 183-residue polypeptide: Adenine phosphoribosyltransferase (183 aa).

Belongs to the purine/pyrimidine phosphoribosyltransferase family. As to quaternary structure, homodimer.

Its subcellular location is the cytoplasm. The catalysed reaction is AMP + diphosphate = 5-phospho-alpha-D-ribose 1-diphosphate + adenine. It functions in the pathway purine metabolism; AMP biosynthesis via salvage pathway; AMP from adenine: step 1/1. Functionally, catalyzes a salvage reaction resulting in the formation of AMP, that is energically less costly than de novo synthesis. The polypeptide is Adenine phosphoribosyltransferase (Salmonella heidelberg (strain SL476)).